The chain runs to 627 residues: Membrane protein insertase YidC (627 aa).

Helical transmembrane passes span Lys3–Asn23, Trp376–Tyr396, Leu450–Ile470, Phe502–Ile522, Glu534–Phe554, and Ala558–Ser578.

The protein belongs to the OXA1/ALB3/YidC family. Type 1 subfamily. In terms of assembly, interacts with the Sec translocase complex via SecD. Specifically interacts with transmembrane segments of nascent integral membrane proteins during membrane integration.

It is found in the cell inner membrane. In terms of biological role, required for the insertion and/or proper folding and/or complex formation of integral membrane proteins into the membrane. Involved in integration of membrane proteins that insert both dependently and independently of the Sec translocase complex, as well as at least some lipoproteins. Aids folding of multispanning membrane proteins. This Porphyromonas gingivalis (strain ATCC BAA-308 / W83) protein is Membrane protein insertase YidC.